Reading from the N-terminus, the 593-residue chain is Pyruvate kinase isozyme A, chloroplastic (593 aa).

The tract at residues 57–94 is disordered; it reads DEPQSSPVLVSENGSGGVLSSATQEYGRNAAPGTDSSS. Arg-144 provides a ligand contact to substrate. Positions 146, 178, and 179 each coordinate K(+). 146 to 149 contributes to the ATP binding site; it reads NMCH. Glu-343 serves as a coordination point for Mg(2+). The substrate site is built by Gly-366, Asp-367, and Ser-399. Asp-367 contacts Mg(2+).

It belongs to the pyruvate kinase family. The cofactor is Mg(2+). Requires K(+) as cofactor. As to expression, highest levels in roots. Also found in stems, leaves and flowers.

It is found in the plastid. The protein localises to the chloroplast. It catalyses the reaction pyruvate + ATP = phosphoenolpyruvate + ADP + H(+). It functions in the pathway carbohydrate degradation; glycolysis; pyruvate from D-glyceraldehyde 3-phosphate: step 5/5. This chain is Pyruvate kinase isozyme A, chloroplastic, found in Nicotiana tabacum (Common tobacco).